Here is a 648-residue protein sequence, read N- to C-terminus: Phosphomethylpyrimidine synthase (648 aa).

Residues asparagine 236, methionine 265, tyrosine 294, histidine 330, 350–352 (SRG), 391–394 (DGLR), and glutamate 430 contribute to the substrate site. Residue histidine 434 participates in Zn(2+) binding. Tyrosine 457 contacts substrate. Residue histidine 498 coordinates Zn(2+). [4Fe-4S] cluster contacts are provided by cysteine 578, cysteine 581, and cysteine 586.

This sequence belongs to the ThiC family. In terms of assembly, homodimer. The cofactor is [4Fe-4S] cluster.

The catalysed reaction is 5-amino-1-(5-phospho-beta-D-ribosyl)imidazole + S-adenosyl-L-methionine = 4-amino-2-methyl-5-(phosphooxymethyl)pyrimidine + CO + 5'-deoxyadenosine + formate + L-methionine + 3 H(+). It functions in the pathway cofactor biosynthesis; thiamine diphosphate biosynthesis. Its function is as follows. Catalyzes the synthesis of the hydroxymethylpyrimidine phosphate (HMP-P) moiety of thiamine from aminoimidazole ribotide (AIR) in a radical S-adenosyl-L-methionine (SAM)-dependent reaction. The protein is Phosphomethylpyrimidine synthase of Aliivibrio salmonicida (strain LFI1238) (Vibrio salmonicida (strain LFI1238)).